A 466-amino-acid polypeptide reads, in one-letter code: A-type ATP synthase subunit B (466 aa).

This sequence belongs to the ATPase alpha/beta chains family. Has multiple subunits with at least A(3), B(3), C, D, E, F, H, I and proteolipid K(x).

It localises to the cell membrane. Functionally, component of the A-type ATP synthase that produces ATP from ADP in the presence of a proton gradient across the membrane. The B chain is a regulatory subunit. This chain is A-type ATP synthase subunit B, found in Metallosphaera sedula (strain ATCC 51363 / DSM 5348 / JCM 9185 / NBRC 15509 / TH2).